The primary structure comprises 275 residues: Bis(5'-nucleosyl)-tetraphosphatase, symmetrical (275 aa).

This sequence belongs to the Ap4A hydrolase family.

It carries out the reaction P(1),P(4)-bis(5'-adenosyl) tetraphosphate + H2O = 2 ADP + 2 H(+). Its function is as follows. Hydrolyzes diadenosine 5',5'''-P1,P4-tetraphosphate to yield ADP. This chain is Bis(5'-nucleosyl)-tetraphosphatase, symmetrical, found in Haemophilus influenzae (strain PittGG).